Here is a 471-residue protein sequence, read N- to C-terminus: MNNHIQTAISEQGIEAYLHAQQHKSLLRFLTCGSVDDGKSTLIGRLLHDSQQIYEDQLKALESDSQKLGTTGEKLDLALLVDGLQAEREQGITIDVAYRYFSTAKRKFIISDTPGHEQYTRNMATGASTCDLAIILIDARKGVLDQTRRHSFIASLLGIKQFVVAVNKMDLVEFSQEVFDRISADYREFAKKLNVDTIQIVPVSALDGDNVVNPSDKLAWYQGETLLSLLESADVERELERHPVRLPVQYVNRPNLDFRGFAGTLAAGILRVGDKLAVLPSGKESTVTRIVTFDGDLEYALPGQAITVTFADEIDISRGDLLVDAAKKPQVTQNVLAHIVWMGEESLQPGRVYDVKLATKKTRGQVEVIRHRIEINKLDQLDASELHLNEIGLCEVSLTDPVAFDPYTDIRDTGSFILIDRLTNVTVGAGMIVEGLAAKAVAGQYSEFEIELNALVRKHFPHWQALAIGKE.

The tr-type G domain maps to 24–240 (KSLLRFLTCG…ESADVERELE (217 aa)). The segment at 33 to 40 (GSVDDGKS) is G1. 33–40 (GSVDDGKS) lines the GTP pocket. The interval 91-95 (GITID) is G2. The G3 stretch occupies residues 112–115 (DTPG). GTP contacts are provided by residues 112-116 (DTPGH) and 167-170 (NKMD). The interval 167 to 170 (NKMD) is G4. The G5 stretch occupies residues 204-206 (SAL).

Belongs to the TRAFAC class translation factor GTPase superfamily. Classic translation factor GTPase family. CysN/NodQ subfamily. Heterodimer composed of CysD, the smaller subunit, and CysN.

The catalysed reaction is sulfate + ATP + H(+) = adenosine 5'-phosphosulfate + diphosphate. The protein operates within sulfur metabolism; hydrogen sulfide biosynthesis; sulfite from sulfate: step 1/3. Functionally, with CysD forms the ATP sulfurylase (ATPS) that catalyzes the adenylation of sulfate producing adenosine 5'-phosphosulfate (APS) and diphosphate, the first enzymatic step in sulfur assimilation pathway. APS synthesis involves the formation of a high-energy phosphoric-sulfuric acid anhydride bond driven by GTP hydrolysis by CysN coupled to ATP hydrolysis by CysD. This Aeromonas salmonicida (strain A449) protein is Sulfate adenylyltransferase subunit 1.